An 826-amino-acid chain; its full sequence is MWALCSLLRSAAGRTMSQGRTISQAPARRERPRKDPLRHLRTREKRGPSGCSGGPNTVYLQVVAAGSRDSGAALYVFSEFNRYLFNCGEGIQRLMQEHKLKVARLDNIFLTRMHWSNVGGLSGMILTLKETGLPKCVLSGPPQLEKYLEAIKIFSGPLKGIELAVRPHSAPEYEDETMTVYQIPIHSEQRRGKHQPWQSPERPLSRLSPERSSDSESNENEPHLPHGVSQRRGVRDSSLVVAFICKLHLKRGNFLVLKAKEMGLPVGTAAIAPIIAAVKDGKSITHEGREILAEELCTPPDPGAAFVVVECPDESFIQPICENATFQRYQGKADAPVALVVHMAPESVLVDSRYQQWMERFGPDTQHLVLNENCASVHNLRSHKIQTQLNLIHPDIFPLLTSFPCKKEGPTLSVPMVQGECLLKYQLRPRREWQRDAIITCNPEEFIIEALQLPNFQQSVQEYRRSAQDGPAPAEKRSQYPEIIFLGTGSAIPMKIRNVSATLVNISPDTSLLLDCGEGTFGQLCRHYGDQVDRVLGTLAAVFVSHLHADHHTGLLNILLQRERALASLGKPFHPLLVVAPNQLKAWLQQYHNQCQEVLHHISMIPAKCLQEGAEISSPAVERLISSLLRTCDLEEFQTCLVRHCKHAFGCALVHTSGWKVVYSGDTMPCEALVRMGKDATLLIHEATLEDGLEEEAVEKTHSTTSQAISVGMRMNAEFIMLNHFSQRYAKVPLFSPNFNEKVGVAFDHMKVCFGDFATMPKLIPPLKALFAGDIEEMEERREKRELRQVRAALLSRELAGGLEDGEPQQKRAHTEEPQAKKVRAQ.

The transit peptide at 1-16 (MWALCSLLRSAAGRTM) directs the protein to the mitochondrion. 2 disordered regions span residues 16–51 (MSQGRTISQAPARRERPRKDPLRHLRTREKRGPSGC) and 188–231 (EQRR…VSQR). A compositionally biased stretch (basic and acidic residues) spans 27-38 (ARRERPRKDPLR). Residues Ser199, Ser208, Ser212, Ser229, Ser618, and Ser736 each carry the phosphoserine modification. Residues 208 to 224 (SPERSSDSESNENEPHL) show a composition bias toward basic and acidic residues. The segment at 798–826 (ELAGGLEDGEPQQKRAHTEEPQAKKVRAQ) is disordered. The segment covering 808-820 (PQQKRAHTEEPQA) has biased composition (basic and acidic residues).

This sequence belongs to the RNase Z family. As to quaternary structure, homodimer. Interacts with PTCD1. It depends on Zn(2+) as a cofactor.

It localises to the mitochondrion. The protein resides in the mitochondrion matrix. Its subcellular location is the mitochondrion nucleoid. The protein localises to the nucleus. The enzyme catalyses Endonucleolytic cleavage of RNA, removing extra 3' nucleotides from tRNA precursor, generating 3' termini of tRNAs. A 3'-hydroxy group is left at the tRNA terminus and a 5'-phosphoryl group is left at the trailer molecule.. In terms of biological role, zinc phosphodiesterase, which displays mitochondrial tRNA 3'-processing endonuclease activity. Involved in tRNA maturation, by removing a 3'-trailer from precursor tRNA. Associates with mitochondrial DNA complexes at the nucleoids to initiate RNA processing and ribosome assembly. The chain is Zinc phosphodiesterase ELAC protein 2 (ELAC2) from Pan troglodytes (Chimpanzee).